A 455-amino-acid polypeptide reads, in one-letter code: Ribulose bisphosphate carboxylase large chain (455 aa).

K5 is subject to N6,N6,N6-trimethyllysine. Positions 114 and 164 each coordinate substrate. K166 acts as the Proton acceptor in catalysis. K168 serves as a coordination point for substrate. 3 residues coordinate Mg(2+): K192, D194, and E195. At K192 the chain carries N6-carboxylysine. H285 serves as the catalytic Proton acceptor. Residues R286, H318, and S370 each coordinate substrate.

The protein belongs to the RuBisCO large chain family. Type I subfamily. As to quaternary structure, heterohexadecamer of 8 large chains and 8 small chains; disulfide-linked. The disulfide link is formed within the large subunit homodimers. It depends on Mg(2+) as a cofactor. In terms of processing, the disulfide bond which can form in the large chain dimeric partners within the hexadecamer appears to be associated with oxidative stress and protein turnover.

It is found in the plastid. It localises to the chloroplast. It catalyses the reaction 2 (2R)-3-phosphoglycerate + 2 H(+) = D-ribulose 1,5-bisphosphate + CO2 + H2O. It carries out the reaction D-ribulose 1,5-bisphosphate + O2 = 2-phosphoglycolate + (2R)-3-phosphoglycerate + 2 H(+). In terms of biological role, ruBisCO catalyzes two reactions: the carboxylation of D-ribulose 1,5-bisphosphate, the primary event in carbon dioxide fixation, as well as the oxidative fragmentation of the pentose substrate in the photorespiration process. Both reactions occur simultaneously and in competition at the same active site. In Lupinus nanus (Sky lupine), this protein is Ribulose bisphosphate carboxylase large chain.